Consider the following 409-residue polypeptide: Peptidase T (409 aa).

His-78 provides a ligand contact to Zn(2+). Residue Asp-80 is part of the active site. Asp-140 is a binding site for Zn(2+). The Proton acceptor role is filled by Glu-174. The Zn(2+) site is built by Glu-175, Asp-197, and His-379.

Belongs to the peptidase M20B family. Zn(2+) serves as cofactor.

Its subcellular location is the cytoplasm. The catalysed reaction is Release of the N-terminal residue from a tripeptide.. Functionally, cleaves the N-terminal amino acid of tripeptides. This is Peptidase T from Aliivibrio salmonicida (strain LFI1238) (Vibrio salmonicida (strain LFI1238)).